The following is a 137-amino-acid chain: MLQPKRTKYRKQFKGRIKGVAKGGSDLAFGEFGLKAQEPNRVNAREIEAARRAITRHMKRAGRVWIRVFPDVPVTAKPTEVRMGKGKGSVEYWACKVKPGRMMFEIDGVSEELAREALRLGAAKLSVKTRFVQRIAE.

This sequence belongs to the universal ribosomal protein uL16 family. Part of the 50S ribosomal subunit.

Binds 23S rRNA and is also seen to make contacts with the A and possibly P site tRNAs. This Sinorhizobium medicae (strain WSM419) (Ensifer medicae) protein is Large ribosomal subunit protein uL16.